The primary structure comprises 188 residues: Josephin-2 (188 aa).

Residues 11 to 188 form the Josephin domain; that stretch reads PPSVYHERQR…EEAGCWLNTS (178 aa). C24 (nucleophile) is an active-site residue. H125 functions as the Proton acceptor in the catalytic mechanism.

Its subcellular location is the cytoplasm. It is found in the cytosol. It carries out the reaction Thiol-dependent hydrolysis of ester, thioester, amide, peptide and isopeptide bonds formed by the C-terminal Gly of ubiquitin (a 76-residue protein attached to proteins as an intracellular targeting signal).. Its function is as follows. Cleaves 'Lys-63'-linked poly-ubiquitin chains, and with lesser efficiency 'Lys-48'-linked poly-ubiquitin chains (in vitro). May act as a deubiquitinating enzyme. This is Josephin-2 (Josd2) from Mus musculus (Mouse).